A 426-amino-acid chain; its full sequence is Serine--tRNA ligase (426 aa).

An L-serine-binding site is contributed by 233–235 (TSE). 264–266 (RAE) contributes to the ATP binding site. Glu287 contacts L-serine. 351–354 (EISS) contributes to the ATP binding site. L-serine is bound at residue Ser387.

It belongs to the class-II aminoacyl-tRNA synthetase family. Type-1 seryl-tRNA synthetase subfamily. Homodimer. The tRNA molecule binds across the dimer.

The protein localises to the cytoplasm. It catalyses the reaction tRNA(Ser) + L-serine + ATP = L-seryl-tRNA(Ser) + AMP + diphosphate + H(+). The catalysed reaction is tRNA(Sec) + L-serine + ATP = L-seryl-tRNA(Sec) + AMP + diphosphate + H(+). Its pathway is aminoacyl-tRNA biosynthesis; selenocysteinyl-tRNA(Sec) biosynthesis; L-seryl-tRNA(Sec) from L-serine and tRNA(Sec): step 1/1. In terms of biological role, catalyzes the attachment of serine to tRNA(Ser). Is also able to aminoacylate tRNA(Sec) with serine, to form the misacylated tRNA L-seryl-tRNA(Sec), which will be further converted into selenocysteinyl-tRNA(Sec). In Xanthomonas euvesicatoria pv. vesicatoria (strain 85-10) (Xanthomonas campestris pv. vesicatoria), this protein is Serine--tRNA ligase.